Reading from the N-terminus, the 372-residue chain is Nucleosome assembly protein 1;1 (372 aa).

Residues 26 to 80 are a coiled coil; that stretch reads VNALKNKLQNLAGQRSDVLENLTPNVRKRVDALRDIQSQHDELEAKFREERAILE. Phosphoserine is present on Ser-41. The short motif at 47–62 is the Nuclear export signal element; that stretch reads LTPNVRKRVDALRDIQ. The short motif at 223-228 is the Nuclear localization signal element; it reads KKKPKK. The tract at residues 299 to 372 is disordered; it reads AMEAEDFEID…DERPPECKQQ (74 aa). The span at 300–337 shows a compositional bias: acidic residues; sequence MEAEDFEIDDDEEDDIDEDEDEEDEEDEEDDDDEDEEE. Residues 360–372 show a composition bias toward basic and acidic residues; the sequence is GKQDERPPECKQQ. At Cys-369 the chain carries Cysteine methyl ester. The S-farnesyl cysteine moiety is linked to residue Cys-369. Residues 370-372 constitute a propeptide, removed in mature form; it reads KQQ.

The protein belongs to the nucleosome assembly protein (NAP) family. Can form homomeric and heteromeric protein complexes with NAP1;2, NAP1;3 and NAP1;4. Binds histone H2A. Interacts with PP438/PNM1. Prenylation of the protein is required for its function during the cell proliferation phase of leaf development. Ubiquitous.

It is found in the nucleus. The protein localises to the cytoplasm. Functionally, may modulate chromatin structure by regulation of nucleosome assembly/disassembly. Contributes to the regulation of cell proliferation and cell expansion. May function in nucleotide excision repair (NER). Involved in somatic homologous recombination. This chain is Nucleosome assembly protein 1;1 (NAP1;1), found in Arabidopsis thaliana (Mouse-ear cress).